Reading from the N-terminus, the 201-residue chain is Ras-related protein Rab-1B (201 aa).

N-acetylmethionine is present on methionine 1. GTP-binding residues include serine 17, glycine 18, valine 19, glycine 20, lysine 21, serine 22, cysteine 23, tyrosine 33, threonine 34, glutamate 35, serine 36, serine 39, and threonine 40. A Mg(2+)-binding site is contributed by serine 22. Positions 30–45 (DDTYTESYISTIGVDF) match the Switch 1 motif. Residues threonine 40 and aspartate 63 each coordinate Mg(2+). Positions 64–83 (TAGQERGRTITSSYYRGAHG) are switch 2 region; required for interaction with REP1/CHM. A Switch 2 motif is present at residues 65–80 (AGQERGRTITSSYYRG). Positions 66, 121, 122, 124, 151, 152, and 153 each coordinate GTP. A disordered region spans residues 173-201 (MGPGAASGGERPNLKIDSTPVKQAGGGCC). Residues cysteine 200 and cysteine 201 are each lipidated (S-geranylgeranyl cysteine). Cysteine 201 is subject to Cysteine methyl ester.

It belongs to the small GTPase superfamily. Rab family. In terms of assembly, interacts with MICAL1 and MICAL2. Interacts (in GTP-bound form) with MICALCL, MICAL1 and MILCAL3. Interacts with GDI1; the interaction requires the GDP-bound state. Interacts with CHM/REP1; the interaction requires the GDP-bound form and is necessary for prenylation by GGTase II. Interacts with RabGAP TBC1D20. Interacts (in GDP-bound form) with lipid phosphatase MTMR6 (via GRAM domain); the interaction regulates MTMR6 recruitment to the endoplasmic reticulum-Golgi intermediate compartment. Interacts (in GDP-bound form) with lipid phosphatase MTMR7. Mg(2+) is required as a cofactor. Prenylated; by GGTase II, only after interaction of the substrate with Rab escort protein 1 (REP1).

The protein resides in the cytoplasm. Its subcellular location is the membrane. It localises to the preautophagosomal structure membrane. The protein localises to the perinuclear region. It catalyses the reaction GTP + H2O = GDP + phosphate + H(+). With respect to regulation, regulated by guanine nucleotide exchange factors (GEFs) which promote the exchange of bound GDP for free GTP. Regulated by GTPase activating proteins (GAPs) including TBC1D20 which increases the GTP hydrolysis activity. Inhibited by GDP dissociation inhibitors (GDIs). Functionally, the small GTPases Rab are key regulators of intracellular membrane trafficking, from the formation of transport vesicles to their fusion with membranes. Rabs cycle between an inactive GDP-bound form and an active GTP-bound form that is able to recruit to membranes different set of downstream effectors directly responsible for vesicle formation, movement, tethering and fusion. Plays a role in the initial events of the autophagic vacuole development which take place at specialized regions of the endoplasmic reticulum. Regulates vesicular transport between the endoplasmic reticulum and successive Golgi compartments. Required to modulate the compacted morphology of the Golgi. Promotes the recruitment of lipid phosphatase MTMR6 to the endoplasmic reticulum-Golgi intermediate compartment. The chain is Ras-related protein Rab-1B (RAB1B) from Sus scrofa (Pig).